The following is a 118-amino-acid chain: Hydrogenase maturation factor HypA (118 aa).

H2 lines the Ni(2+) pocket. Residues C73, C76, C93, and C96 each contribute to the Zn(2+) site.

The protein belongs to the HypA/HybF family.

Involved in the maturation of [NiFe] hydrogenases. Required for nickel insertion into the metal center of the hydrogenase. In Lawsonia intracellularis (strain PHE/MN1-00), this protein is Hydrogenase maturation factor HypA.